The sequence spans 1185 residues: MKKFNFRKVLDGLTASSPGSGSSSGSNSGGAGSGSVHPGGTAGLPREEIQESLTSDYFQICKTVRHGFPYQPTALAFDPVQKILAIGTRTGAIRILGRPGVDCYCQHESGAAVLQLQFLINEGALVSASSDDTLHLWNLRQKRPAILHSLKFNRERITYCHLPFQSKWLYVGTERGNTHIVNIESFILSGYVIMWNKAIELSTKTHPGPVVHLSDSPRDEGKLLIGYENGTVVFWDLKSKRAELRVYYDEAIHSIDWHHEGKQFMCSHSDGSLTLWNLKSPSRPFQTTVPHGKSQREGRKSESCKPILKVEYKTCRNSEPFIIFSGGLSYDKACRRPSLTIMHGKAITVLEMDHPIVEFLTLCETPYPNEFQEPYAVAVLLEKDLIVVDLTQTNFPIFENPYPMDIHESPVTCTAYFADCPPDLILVLYSIGVKHKKQGYSNKEWPVSGGAWNLGAQTYPEIIITGHADGTIKFWDASAMTLQMLYKLKTSKVFEKQKAGEGKQTCELVEEDPFAVQMIYWCPESRIFCVSGVSAYVIIYKFSRHEVTTEIVSLEVRLQCDVEDIITPEPETSPPFPDLSSQLPPSRSLSGSTNTVSSEGVTKDSIPCLSVKTRPVRMPPGYQADLVIQLVWVDGEPPQQITSLSISSAYGIVAFGNCTGLVVVDFIQKTVLLSMGTIDLYRSSDLYQRQPRSPRKNRQFIADNFCMRGLSNFYPDLTKRIRTSYQSLTELNDSPVPLELERCKSPTSDHVNGHCTSPTSQSCSSGKRLSSADVSKVNRWGPGRPPFRKAQSAACMEISLPVTTEETRENSYNRSRSSSISSIDKDSKEAITALYFMESFARKNDSTVSPCLFVGTSLGMVVLISLNLPSSDEQRFTEPVVVLPSGTFLSLKGAVLTFSCMDRTGSLMQPPYEVWRDPNNTDENEKTWKRKLVMNYSSSSQEMGDHQYTIICSEKQAKVFSLPSQTCLYVHNITETSFILQADVVVMCNSACLACFCANGHIMIMSLPSLRPMLDVNYLPLTDMRIARTFCFTNEGQALYLVSPTEIQRLTYSQEMCDNIQDMLGDLFTPIETPEAQNRGFLKGLFGGSGQTFDREELFGEASAGKASRSLAQHIPGPGSIEGMKGAAGGVMGELTRARIALDERGQRLGELEEKTAGMMTSAEAFSKHAHELMLKYKDKKWYQF.

Met1 bears the N-acetylmethionine mark. Residues 15-44 form a disordered region; that stretch reads ASSPGSGSSSGSNSGGAGSGSVHPGGTAGL. Residues 16–26 are compositionally biased toward low complexity; sequence SSPGSGSSSGS. WD repeat units follow at residues 73–106, 113–152, 157–193, 212–246, 252–284, 306–348, 356–390, 412–489, 517–628, and 642–704; these read TALAFDPVQKILAIGTRTGAIRILGRPGVDCYCQ, VLQLQFLINEGALVSASSDDTLHLWNLRQKRPAILHSLKF, ITYCHLPFQSKWLYVGTERGNTHIVNIESFILSGYVI, HLSDSPRDEGKLLIGYENGTVVFWDLKSKRAELRV, IHSIDWHHEGKQFMCSHSDGSLTLWNLKSPSRP, PILK…KAIT, IVEFLTLCETPYPNEFQEPYAVAVLLEKDLIVVDL, TCTA…YKLK, QMIY…DLVI, and TSLS…IADN. Thr567 bears the Phosphothreonine mark. The segment at 567 to 601 is disordered; sequence TPEPETSPPFPDLSSQLPPSRSLSGSTNTVSSEGV. Residues Ser573, Ser588, and Ser592 each carry the phosphoserine modification. Positions 578–592 are enriched in low complexity; the sequence is DLSSQLPPSRSLSGS. Phosphothreonine is present on Thr595. Ser598 bears the Phosphoserine mark. Omega-N-methylarginine is present on Arg708. The span at 747 to 768 shows a compositional bias: polar residues; that stretch reads TSDHVNGHCTSPTSQSCSSGKR. Residues 747–770 form a disordered region; the sequence is TSDHVNGHCTSPTSQSCSSGKRLS. 11 positions are modified to phosphoserine: Ser762, Ser764, Ser765, Ser770, Ser771, Ser792, Ser799, Ser811, Ser819, Ser821, and Ser822. 4 WD repeats span residues 831 to 888, 897 to 968, 973 to 1017, and 1031 to 1054; these read ITAL…SGTF, TFSC…QTCL, ITET…LDVN, and CFTNEGQALYLVSPTEIQRLTYSQ. The residue at position 1092 (Thr1092) is a Phosphothreonine. One can recognise a v-SNARE coiled-coil homology domain in the interval 1120–1180; sequence SIEGMKGAAG…HELMLKYKDK (61 aa).

It belongs to the WD repeat L(2)GL family. Interacts with STX1A and STX4. Phosphorylated, leading to STXBP5L increased turnover and subsequent de-repression of insulin secretion. Phosphorylated on serine residues in response to glucose or phorbol esters. Post-translationally, ubiquitinated by the E3 ligase SYVN1, leading to STXBP5L proteasomal degradation. Detected in hippocampus and cerebellum. Expressed in pancreatic beta-cells where it modulates insulin secretion.

It localises to the cytoplasm. It is found in the cell membrane. Its subcellular location is the membrane. Its function is as follows. Plays a role in vesicle trafficking and exocytosis inhibition. In pancreatic beta-cells, inhibits insulin secretion probably by interacting with and regulating STX1A and STX4, key t-SNARE proteins involved in the fusion of insulin granules to the plasma membrane. Also plays a role in neurotransmitter release by inhibiting basal acetylcholine release from axon terminals and by preventing synaptic fatigue upon repetitive stimulation. Promotes as well axonal outgrowth. This is Syntaxin-binding protein 5-like (Stxbp5l) from Mus musculus (Mouse).